We begin with the raw amino-acid sequence, 361 residues long: Thermostable alkaline protease (361 aa).

The N-terminal stretch at Met-1–Ala-24 is a signal peptide. Positions Ser-25–Ser-93 are excised as a propeptide. Ca(2+) is bound at residue Gln-94. The Peptidase S8 domain occupies Pro-97–Thr-360. The Charge relay system role is filled by Asp-124. Asp-132 contacts Ca(2+). The active-site Charge relay system is the His-154. Ca(2+)-binding residues include Leu-165, Asn-167, Ile-169, Val-171, Ala-255, Tyr-257, and Val-260. The active-site Charge relay system is the Ser-307.

This sequence belongs to the peptidase S8 family. Requires Ca(2+) as cofactor.

It is found in the secreted. Its function is as follows. Shows keratinolytic activity. This is Thermostable alkaline protease from Halalkalibacterium halodurans (strain ATCC BAA-125 / DSM 18197 / FERM 7344 / JCM 9153 / C-125) (Bacillus halodurans).